The chain runs to 247 residues: tRNA pseudouridine synthase A (247 aa).

The Nucleophile role is filled by Asp-52. Tyr-110 lines the substrate pocket.

Belongs to the tRNA pseudouridine synthase TruA family. In terms of assembly, homodimer.

It catalyses the reaction uridine(38/39/40) in tRNA = pseudouridine(38/39/40) in tRNA. In terms of biological role, formation of pseudouridine at positions 38, 39 and 40 in the anticodon stem and loop of transfer RNAs. This chain is tRNA pseudouridine synthase A, found in Geobacter sp. (strain M21).